A 313-amino-acid chain; its full sequence is Porphobilinogen deaminase (313 aa).

At C242 the chain carries S-(dipyrrolylmethanemethyl)cysteine.

This sequence belongs to the HMBS family. As to quaternary structure, monomer. It depends on dipyrromethane as a cofactor.

It catalyses the reaction 4 porphobilinogen + H2O = hydroxymethylbilane + 4 NH4(+). It functions in the pathway porphyrin-containing compound metabolism; protoporphyrin-IX biosynthesis; coproporphyrinogen-III from 5-aminolevulinate: step 2/4. Its function is as follows. Tetrapolymerization of the monopyrrole PBG into the hydroxymethylbilane pre-uroporphyrinogen in several discrete steps. This chain is Porphobilinogen deaminase, found in Pseudomonas fluorescens (strain ATCC BAA-477 / NRRL B-23932 / Pf-5).